Consider the following 103-residue polypeptide: Large ribosomal subunit protein bL21 (103 aa).

The protein belongs to the bacterial ribosomal protein bL21 family. As to quaternary structure, part of the 50S ribosomal subunit. Contacts protein L20.

Its function is as follows. This protein binds to 23S rRNA in the presence of protein L20. In Beijerinckia indica subsp. indica (strain ATCC 9039 / DSM 1715 / NCIMB 8712), this protein is Large ribosomal subunit protein bL21.